The primary structure comprises 843 residues: MEAEESSSSVVPLPQDVQSVVRGGFRCLLCGVNIPNRPSLTDHLSGRRHVRLHEERDKRNQQQERSVYVSNFPRETSEEQLRDVFQKISPVRNIVMDKDRGLYAIVEFESKDGMCAALEEPQIKLSGKRLRVKPREKKEFQRKKGGSPRTLQPPDPEALSKELLNCADVEQQIKKLVSLCSPSHHESHLRELLLSLLQETFTEFFPGCQLLPFGSSVNGFEISGCDLDLYLDLGDDEAENVEGKAEKEIQNREESSTDMEVSMEDPETERKEEEMEIGNSKNDEDEDVTPGLSLKGLSSEEILEVVGKVLRHCVPGVHGVQSVPTARRPVIHFQHKTSGLRGDVTLNNRLALRNSSFLRLCSDLDARVPQLVYTVRYWARVNQLAGNPFGGGPLLNNYALTLLVFFFLQTRNPPVLPTLVHLREETANEVPQVIDGWDCSFPSDPAQVKESGNQQSLSSLLSEFFSFYASLDLHLLILCPCNGLTIPLPFSSPPPAWSEGFRLGPLNIQDPFELSHNVCGNVSSRAARRFISHCAAAARICRTPNYNLHSTSHPWGITPILLPPPTERECVGRGGTEISIPLGGVSPEKTYAAVSKVFVDVLLCTLEEGREDSCQEGKALELSTKHAKAQCKVEKNEVGGELGEQEVPCKAEQNNTKEASKQKSIFKTEEGMTESARRKREMTEPCMSDMTNGKKRRLEFTRGIWDHHLATSAMEEEMCGEAHKDSKTKIDYSNNGTAQWELLVWHRVWEGRRKERRRKQKGEADGVELEIAVSQALALEKEDKCDGPLMKLILTAQLTVKESLQLYLTPKFDPQGLSSTFFHFLESYLPRMVAQIQGCGDPV.

The Matrin-type zinc finger occupies 25–55 (FRCLLCGVNIPNRPSLTDHLSGRRHVRLHEE). Positions 54–126 (EERDKRNQQQ…ALEEPQIKLS (73 aa)) constitute an RRM domain. Basic residues predominate over residues 134–146 (PREKKEFQRKKGG). Residues 134-157 (PREKKEFQRKKGGSPRTLQPPDPE) are disordered. Position 215 (S215) interacts with ATP. 2 residues coordinate Mg(2+): D226 and D228. Positions 226 and 228 each coordinate UTP. Basic and acidic residues predominate over residues 241–255 (VEGKAEKEIQNREES). Positions 241 to 292 (VEGKAEKEIQNREESSTDMEVSMEDPETERKEEEMEIGNSKNDEDEDVTPGL) are disordered. N354 contacts ATP. N354, R376, Y398, and H516 together coordinate UTP. Residues 456 to 516 (SLSSLLSEFF…NIQDPFELSH (61 aa)) form the PAP-associated domain. Positions 564–837 (PPTERECVGR…YLPRMVAQIQ (274 aa)) are KA1; binds the bulging loops of U6 snRNA but is dispensable for terminal uridylyltransferase activity. A disordered region spans residues 653-691 (QNNTKEASKQKSIFKTEEGMTESARRKREMTEPCMSDMT). The segment covering 658–670 (EASKQKSIFKTEE) has biased composition (basic and acidic residues).

This sequence belongs to the DNA polymerase type-B-like family. Associates with the cleavage and polyadenylation specificity factor (CPSF) complex. Mg(2+) is required as a cofactor. Mn(2+) serves as cofactor.

The protein resides in the nucleus. The protein localises to the nucleolus. It is found in the nucleus speckle. It carries out the reaction RNA(n) + UTP = RNA(n)-3'-uridine ribonucleotide + diphosphate. The catalysed reaction is RNA(n) + ATP = RNA(n)-3'-adenine ribonucleotide + diphosphate. Functionally, poly(A) polymerase that creates the 3'-poly(A) tail of specific pre-mRNAs. In addition to polyadenylation, it is also required for the 3'-end cleavage of pre-mRNAs: binds to the 3'UTR of targeted pre-mRNAs and promotes the recruitment and assembly of the CPSF complex on the 3'UTR of pre-mRNAs. In addition to adenylyltransferase activity, also has uridylyltransferase activity. However, the ATP ratio is higher than UTP in cells, suggesting that it functions primarily as a poly(A) polymerase. This is Speckle targeted PIP5K1A-regulated poly(A) polymerase (tut1) from Xenopus tropicalis (Western clawed frog).